Consider the following 202-residue polypeptide: Ras-related protein Rab-1A (202 aa).

Residues 15-23, 33-40, 63-67, 121-124, and 151-153 each bind GTP; these read GDSGVGKSC, YSESFIST, DTAGQ, NKSD, and SAK. An Effector region motif is present at residues 37–45; sequence FISTIGVDF. The tract at residues 180–202 is disordered; that stretch reads QTVDKNKVVPGSSAPISPKSGCC. 2 S-geranylgeranyl cysteine lipidation sites follow: Cys-201 and Cys-202.

Belongs to the small GTPase superfamily. Rab family.

The protein localises to the cell membrane. In Dictyostelium discoideum (Social amoeba), this protein is Ras-related protein Rab-1A (rab1A).